We begin with the raw amino-acid sequence, 224 residues long: Thiamine-phosphate synthase (224 aa).

4-amino-2-methyl-5-(diphosphooxymethyl)pyrimidine-binding positions include 43–47 (QYRPK) and Asn-75. 2 residues coordinate Mg(2+): Asp-76 and Asp-95. 4-amino-2-methyl-5-(diphosphooxymethyl)pyrimidine is bound at residue Ser-114. A 2-[(2R,5Z)-2-carboxy-4-methylthiazol-5(2H)-ylidene]ethyl phosphate-binding site is contributed by 141–143 (SAT). Lys-144 serves as a coordination point for 4-amino-2-methyl-5-(diphosphooxymethyl)pyrimidine. Gly-171 provides a ligand contact to 2-[(2R,5Z)-2-carboxy-4-methylthiazol-5(2H)-ylidene]ethyl phosphate.

This sequence belongs to the thiamine-phosphate synthase family. It depends on Mg(2+) as a cofactor.

The enzyme catalyses 2-[(2R,5Z)-2-carboxy-4-methylthiazol-5(2H)-ylidene]ethyl phosphate + 4-amino-2-methyl-5-(diphosphooxymethyl)pyrimidine + 2 H(+) = thiamine phosphate + CO2 + diphosphate. It carries out the reaction 2-(2-carboxy-4-methylthiazol-5-yl)ethyl phosphate + 4-amino-2-methyl-5-(diphosphooxymethyl)pyrimidine + 2 H(+) = thiamine phosphate + CO2 + diphosphate. The catalysed reaction is 4-methyl-5-(2-phosphooxyethyl)-thiazole + 4-amino-2-methyl-5-(diphosphooxymethyl)pyrimidine + H(+) = thiamine phosphate + diphosphate. It functions in the pathway cofactor biosynthesis; thiamine diphosphate biosynthesis; thiamine phosphate from 4-amino-2-methyl-5-diphosphomethylpyrimidine and 4-methyl-5-(2-phosphoethyl)-thiazole: step 1/1. Condenses 4-methyl-5-(beta-hydroxyethyl)thiazole monophosphate (THZ-P) and 2-methyl-4-amino-5-hydroxymethyl pyrimidine pyrophosphate (HMP-PP) to form thiamine monophosphate (TMP). The protein is Thiamine-phosphate synthase of Methylococcus capsulatus (strain ATCC 33009 / NCIMB 11132 / Bath).